Here is a 278-residue protein sequence, read N- to C-terminus: 4-deoxy-L-threo-5-hexosulose-uronate ketol-isomerase (278 aa).

The Zn(2+) site is built by His196, His198, Glu203, and His245.

The protein belongs to the KduI family. Homohexamer. The cofactor is Zn(2+).

The enzyme catalyses 5-dehydro-4-deoxy-D-glucuronate = 3-deoxy-D-glycero-2,5-hexodiulosonate. Its pathway is glycan metabolism; pectin degradation; 2-dehydro-3-deoxy-D-gluconate from pectin: step 4/5. In terms of biological role, catalyzes the isomerization of 5-dehydro-4-deoxy-D-glucuronate to 3-deoxy-D-glycero-2,5-hexodiulosonate. In Escherichia coli (strain UTI89 / UPEC), this protein is 4-deoxy-L-threo-5-hexosulose-uronate ketol-isomerase.